A 449-amino-acid polypeptide reads, in one-letter code: uncharacterized protein (449 aa).

An N-terminal signal peptide occupies residues Met-1–Ala-20. Residues Ala-21–Thr-400 lie on the Extracellular side of the membrane. An N-linked (GlcNAc...) asparagine glycan is attached at Asn-49. Disordered regions lie at residues Ala-72–Gly-101, Met-154–Ser-187, and Gln-215–Gln-381. Low complexity-rich tracts occupy residues Met-154–Gly-184 and Gln-215–Ser-234. Polar residues-rich tracts occupy residues Gly-255–Asn-279 and Thr-352–Gly-367. Residues Leu-401–Ala-421 form a helical membrane-spanning segment. At Leu-422–Met-449 the chain is on the cytoplasmic side.

Highest expression in heart, placenta, liver, pancreas and colon. Also detected in brain, lung, skeletal muscle, kidney, spleen, prostate, testis, ovary and small intestine. Lowest expression in thymus and leukocytes.

Its subcellular location is the cell membrane. The protein localises to the golgi apparatus. It is found in the trans-Golgi network membrane. This is an uncharacterized protein from Homo sapiens (Human).